Consider the following 259-residue polypeptide: MKSAVNFELPLAVKIRKQIVQALNDFNMIEDGDKVMVCVSGGKDSSVLLALLTEIQRRSERKFQIEAAILDQKQPGFDVSKFKVWVESLGVPFHIVEKDTYSIVKEKVQGGTFCSLCSRLRRAILYDFAHANGFTKLALGHHRDDVVHTALLNMFYVGTTAAMPPKLKSDDERNILVRPLCYVSERDIEELAAEWAFPVIPCNLCGSQDGLKRQRIKKLVRDLEKEIPNIYASIQTSMTNIKPSQLMDQDLWDFKNLKT.

The PP-loop motif motif lies at 40–45 (SGGKDS). [4Fe-4S] cluster-binding residues include cysteine 114, cysteine 117, and cysteine 205.

It belongs to the TtcA family. Homodimer. Mg(2+) serves as cofactor. Requires [4Fe-4S] cluster as cofactor.

Its subcellular location is the cytoplasm. It catalyses the reaction cytidine(32) in tRNA + S-sulfanyl-L-cysteinyl-[cysteine desulfurase] + AH2 + ATP = 2-thiocytidine(32) in tRNA + L-cysteinyl-[cysteine desulfurase] + A + AMP + diphosphate + H(+). It participates in tRNA modification. Catalyzes the ATP-dependent 2-thiolation of cytidine in position 32 of tRNA, to form 2-thiocytidine (s(2)C32). The sulfur atoms are provided by the cysteine/cysteine desulfurase (IscS) system. The protein is tRNA-cytidine(32) 2-sulfurtransferase of Bdellovibrio bacteriovorus (strain ATCC 15356 / DSM 50701 / NCIMB 9529 / HD100).